Here is a 294-residue protein sequence, read N- to C-terminus: Probable 2-(5''-triphosphoribosyl)-3'-dephosphocoenzyme-A synthase (294 aa).

The protein belongs to the CitG/MdcB family.

The enzyme catalyses 3'-dephospho-CoA + ATP = 2'-(5''-triphospho-alpha-D-ribosyl)-3'-dephospho-CoA + adenine. The sequence is that of Probable 2-(5''-triphosphoribosyl)-3'-dephosphocoenzyme-A synthase from Streptococcus equi subsp. zooepidemicus (strain H70).